The chain runs to 1151 residues: Error-prone DNA polymerase (1151 aa).

Positions 1108–1151 (HPVPSGDALIEPLNDDRRDHADAPAQKIRHPRNVRILPPSRDFH) are disordered.

This sequence belongs to the DNA polymerase type-C family. DnaE2 subfamily.

It is found in the cytoplasm. The catalysed reaction is DNA(n) + a 2'-deoxyribonucleoside 5'-triphosphate = DNA(n+1) + diphosphate. Functionally, DNA polymerase involved in damage-induced mutagenesis and translesion synthesis (TLS). It is not the major replicative DNA polymerase. The protein is Error-prone DNA polymerase of Bradyrhizobium diazoefficiens (strain JCM 10833 / BCRC 13528 / IAM 13628 / NBRC 14792 / USDA 110).